We begin with the raw amino-acid sequence, 376 residues long: Glucose-1-phosphate adenylyltransferase (376 aa).

Residues Tyr-101, Gly-166, 181 to 182, and Ser-192 contribute to the alpha-D-glucose 1-phosphate site; that span reads EK.

This sequence belongs to the bacterial/plant glucose-1-phosphate adenylyltransferase family. As to quaternary structure, homotetramer.

The catalysed reaction is alpha-D-glucose 1-phosphate + ATP + H(+) = ADP-alpha-D-glucose + diphosphate. Its pathway is glycan biosynthesis; glycogen biosynthesis. In terms of biological role, involved in the biosynthesis of ADP-glucose, a building block required for the elongation reactions to produce glycogen. Catalyzes the reaction between ATP and alpha-D-glucose 1-phosphate (G1P) to produce pyrophosphate and ADP-Glc. This Bacillus cereus (strain ZK / E33L) protein is Glucose-1-phosphate adenylyltransferase.